A 459-amino-acid chain; its full sequence is Probable rhamnogalacturonase C (459 aa).

The first 18 residues, 1–18 (MRASILPLTLFLATLAGA), serve as a signal peptide directing secretion. N-linked (GlcNAc...) asparagine glycosylation is found at Asn-36, Asn-64, Asn-77, Asn-140, and Asn-155. A disulfide bridge connects residues Cys-39 and Cys-65. Asp-216 serves as the catalytic Proton donor. A disulfide bond links Cys-218 and Cys-235. N-linked (GlcNAc...) asparagine glycosylation is found at Asn-236 and Asn-251. His-290 is a catalytic residue. The N-linked (GlcNAc...) asparagine glycan is linked to Asn-315. Residues Cys-337 and Cys-343 are joined by a disulfide bond. The N-linked (GlcNAc...) asparagine glycan is linked to Asn-356. Cys-365 and Cys-374 are disulfide-bonded.

Belongs to the glycosyl hydrolase 28 family.

The protein resides in the secreted. Its function is as follows. Pectinolytic enzymes consist of four classes of enzymes: pectine lyase, polygalacturonase, pectin methylesterase and rhamnogalacturonase. Hydrolyzes alpha-D-galacturonopyranosyl-(1,2)-alpha-L-rhamnopyranosyl linkages in the backbone of the hairy regions of pectins. The chain is Probable rhamnogalacturonase C (rhgC) from Aspergillus niger (strain ATCC MYA-4892 / CBS 513.88 / FGSC A1513).